A 401-amino-acid chain; its full sequence is Imidazolonepropionase (401 aa).

Positions 66 and 68 each coordinate Fe(3+). His-66 and His-68 together coordinate Zn(2+). 4-imidazolone-5-propanoate is bound by residues Arg-75, Tyr-138, and His-171. Residue Tyr-138 coordinates N-formimidoyl-L-glutamate. His-236 contacts Fe(3+). His-236 is a binding site for Zn(2+). Gln-239 lines the 4-imidazolone-5-propanoate pocket. A Fe(3+)-binding site is contributed by Asp-311. Residue Asp-311 participates in Zn(2+) binding. Asn-313 and Gly-315 together coordinate N-formimidoyl-L-glutamate. Thr-316 contributes to the 4-imidazolone-5-propanoate binding site.

This sequence belongs to the metallo-dependent hydrolases superfamily. HutI family. Requires Zn(2+) as cofactor. Fe(3+) is required as a cofactor.

The protein resides in the cytoplasm. It catalyses the reaction 4-imidazolone-5-propanoate + H2O = N-formimidoyl-L-glutamate. It participates in amino-acid degradation; L-histidine degradation into L-glutamate; N-formimidoyl-L-glutamate from L-histidine: step 3/3. Its function is as follows. Catalyzes the hydrolytic cleavage of the carbon-nitrogen bond in imidazolone-5-propanoate to yield N-formimidoyl-L-glutamate. It is the third step in the universal histidine degradation pathway. The protein is Imidazolonepropionase of Pseudomonas syringae pv. tomato (strain ATCC BAA-871 / DC3000).